A 156-amino-acid polypeptide reads, in one-letter code: MAKKKDSNALAQNRKASFDYAIEDTIEAGMVLTGTEIKSVRQSKINIADAYVRFDGGEATLHNCHISPFEQGNRFNHDPLRVRKLLLHKKQINQLIGASGRDGYTIIPLKVYIKNGFAKCLLGVGKGKKKYDKREDLKKKDAKRDVDRAMRDRQKY.

Residues G127–Y156 are disordered. A compositionally biased stretch (basic and acidic residues) spans D132–Y156.

This sequence belongs to the SmpB family.

It localises to the cytoplasm. Its function is as follows. Required for rescue of stalled ribosomes mediated by trans-translation. Binds to transfer-messenger RNA (tmRNA), required for stable association of tmRNA with ribosomes. tmRNA and SmpB together mimic tRNA shape, replacing the anticodon stem-loop with SmpB. tmRNA is encoded by the ssrA gene; the 2 termini fold to resemble tRNA(Ala) and it encodes a 'tag peptide', a short internal open reading frame. During trans-translation Ala-aminoacylated tmRNA acts like a tRNA, entering the A-site of stalled ribosomes, displacing the stalled mRNA. The ribosome then switches to translate the ORF on the tmRNA; the nascent peptide is terminated with the 'tag peptide' encoded by the tmRNA and targeted for degradation. The ribosome is freed to recommence translation, which seems to be the essential function of trans-translation. This Exiguobacterium sp. (strain ATCC BAA-1283 / AT1b) protein is SsrA-binding protein.